The sequence spans 1325 residues: Cellulose synthase 1 operon protein C (1325 aa).

Positions 1–30 (MNRRYVFSLSAGLLASSCMGAIMPVPVARA) are cleaved as a signal peptide. TPR repeat units lie at residues 50-83 (RQIL…APDA), 85-117 (DVLE…APGS), 292-325 (AGLA…NSHD), 326-359 (ADSL…DPKT), 406-439 (TGAT…DPNN), 558-591 (NDAA…KEDL), 702-735 (MGIA…DPEA), and 737-769 (SPKL…NPQD). Residues 838–886 (VEGSRSASGPAATEEDALAPPSSNPFRHHGYGRQTELGAPVTGGSYSME) are disordered.

The protein belongs to the AcsC/BcsC family.

The protein resides in the cell outer membrane. It participates in glycan metabolism; bacterial cellulose biosynthesis. Functionally, required for maximal bacterial cellulose synthesis. It may be involved in the formation of a membrane complex for extrusion of the cellulose product. In Komagataeibacter xylinus (Gluconacetobacter xylinus), this protein is Cellulose synthase 1 operon protein C (bcsCI).